A 262-amino-acid polypeptide reads, in one-letter code: Transcription factor of morphogenesis MCM1 (262 aa).

Disordered stretches follow at residues 1-62 (MAIK…ERRK) and 140-262 (EEGL…QQYQ). Residues 17–35 (NSHSTNNNNNSNNSNSNNN) show a composition bias toward low complexity. Positions 58 to 118 (KERRKIEIKF…GLVYTFTTPK (61 aa)) constitute an MADS-box domain. The span at 150–170 (QSDGNTGDSPDQSPAPATNPN) shows a compositional bias: polar residues. 3 stretches are compositionally biased toward low complexity: residues 182 to 198 (QQQQ…AQQQ), 224 to 239 (PQQQ…LQGG), and 249 to 262 (NIQN…QQYQ).

As to quaternary structure, interacts with AHR1.

It localises to the nucleus. Transcription factor that is recruited by AHR1 to the promoters of genes involved in biofilm formation, which include several key adhesion genes. Plays an important role in cell adhesion, hyphal growth and virulence. Implicated in the regulation of opaque-phase-specific gene expression. This Candida albicans (strain SC5314 / ATCC MYA-2876) (Yeast) protein is Transcription factor of morphogenesis MCM1 (MCM1).